The chain runs to 2588 residues: Histone-lysine N-methyltransferase, H3 lysine-36 specific (2588 aa).

Residues S110 and S118 each carry the phosphoserine modification. 2 disordered regions span residues 209–264 (GSEQ…LGDT) and 277–307 (LSFQ…TSQE). The span at 235 to 249 (EKQKNKQRSEVDGSN) shows a compositional bias: basic and acidic residues. Polar residues predominate over residues 298–307 (GTSSPSTSQE). 2 positions are modified to phosphoserine: S380 and S383. The interval 383-403 (SADEKEKPCAKSRVRKSSDNI) is disordered. Residue K802 forms a Glycyl lysine isopeptide (Lys-Gly) (interchain with G-Cter in SUMO2) linkage. Disordered stretches follow at residues 830-899 (ASYR…SDKR), 947-987 (ERKR…PGKE), and 1008-1133 (FDSK…PRLN). Positions 855 to 874 (GSSTPNSEKPGDSTQDSVHQ) are enriched in polar residues. Low complexity predominate over residues 881–895 (SALSGELSSSLSSLA). A compositionally biased stretch (basic and acidic residues) spans 1008 to 1033 (FDSKAKQSDPDKNLEKEPSFENRKGP). Residues 1054–1073 (PKKRWQRLNQRRPKPGKRAN) show a composition bias toward basic residues. K1237 participates in a covalent cross-link: Glycyl lysine isopeptide (Lys-Gly) (interchain with G-Cter in SUMO2). The segment at 1279–1324 (ASPRPALESEELLVKTPGNYESKRQRKPTKKLLESNDLDPGFMPKK) is disordered. S1408 carries the post-translational modification Phosphoserine. PHD-type zinc fingers lie at residues 1441 to 1487 (ENVC…CHTG), 1488 to 1544 (IHTC…CHAA), and 1605 to 1649 (VSWC…CKAG). Residues 1654–1716 (YREIVWVKVG…QARVFPYMEG (63 aa)) enclose the PWWP domain. Residues 1788-1838 (SEIPRCNCKATDENPCGIDSECINRMLLYECHPTVCPAGVRCQNQCFSKRQ) enclose the AWS domain. Positions 1840–1957 (PDVEIFRTLQ…AGTELTFNYN (118 aa)) constitute an SET domain. Residues 1850 to 1852 (RGW), 1892 to 1895 (TNFY), 1918 to 1919 (NH), N1963, and K1969 contribute to the S-adenosyl-L-methionine site. The interval 1958-1964 (LECLGNG) is inhibits enzyme activity in the absence of bound histone. The Post-SET domain occupies 1964–1980 (GKTVCKCGAPNCSGFLG). The tract at residues 1989-2010 (VTEEKSRKFKRKPHGKRRSQGE) is disordered. Over residues 1995 to 2006 (RKFKRKPHGKRR) the composition is skewed to basic residues. Residues 2016–2063 (EDECFSCGDAGQLVSCKKPGCPKVYHADCLNLTKRPAGKWECPWHQCD) form a PHD-type 4; atypical zinc finger. 4 disordered regions span residues 2105–2320 (PCGP…PPPE), 2333–2423 (KEKA…PSEH), 2447–2521 (YESA…WGLG), and 2560–2588 (RGQD…SEKK). A compositionally biased stretch (basic and acidic residues) spans 2179-2196 (RPPERTDSSSHLLDRIRD). Residues 2201–2212 (GTKSQSLVSSQR) show a composition bias toward polar residues. Residues 2213-2223 (PQDRPPAKEGP) show a composition bias toward basic and acidic residues. Over residues 2232-2249 (SPMTRPSSSPSVSSLPLE) the composition is skewed to low complexity. Positions 2250–2261 (RPLRMTDSRLDK) are enriched in basic and acidic residues. Phosphoserine is present on S2267. T2360 carries the post-translational modification Phosphothreonine. Position 2369 is a phosphoserine (S2369). Residue K2509 forms a Glycyl lysine isopeptide (Lys-Gly) (interchain with G-Cter in SUMO2) linkage.

This sequence belongs to the class V-like SAM-binding methyltransferase superfamily. In terms of assembly, interacts with AR DNA- and ligand-binding domains. Interacts with the ligand-binding domains of RARA and THRA in the absence of ligand; in the presence of ligand the interaction is severely disrupted but some binding still occurs. Interacts with the ligand-binding domains of RXRA and ESRRA only in the presence of ligand. Interacts with ZNF496. In terms of tissue distribution, expressed in the embryo and the outer region of the uterine decidua at early post-implantation 5.5 dpc stage. Uniformly expressed in embryonic and extraembryonic tissues during gastrulation stage 7.5 dpc. Expressed differentially after stage 14.5 dpc with highest expression in proliferating cells. Enriched in the telencephalic region of the brain, spinal cord, intestinal crypt, tooth buds, thymus and salivary glands at stage 16.5 dpc. Also expressed in the ossification region of developing bones and in the periosteum.

The protein localises to the nucleus. Its subcellular location is the chromosome. It carries out the reaction L-lysyl(36)-[histone H3] + 2 S-adenosyl-L-methionine = N(6),N(6)-dimethyl-L-lysyl(36)-[histone H3] + 2 S-adenosyl-L-homocysteine + 2 H(+). Functionally, histone methyltransferase that dimethylates Lys-36 of histone H3 (H3K36me2). Transcriptional intermediary factor capable of negatively influencing transcription. May also positively influence transcription. Essential for early post-implantation development. This is Histone-lysine N-methyltransferase, H3 lysine-36 specific from Mus musculus (Mouse).